The sequence spans 464 residues: DNA primase DnaG (464 aa).

Positions 198 to 272 constitute a Toprim domain; it reads DSIIVVEGRA…DVDYVARAPE (75 aa). Residues Glu204, Asp246, and Asp248 each contribute to the Mg(2+) site. The segment covering 315-333 has biased composition (basic and acidic residues); it reads RESEGERQPRQVTKPEPEV. Residues 315 to 351 are disordered; it reads RESEGERQPRQVTKPEPEVVKAQPKAETPEEKREPAT.

Belongs to the archaeal DnaG primase family. As to quaternary structure, forms a ternary complex with MCM helicase and DNA. Component of the archaeal exosome complex. The cofactor is Mg(2+).

It carries out the reaction ssDNA + n NTP = ssDNA/pppN(pN)n-1 hybrid + (n-1) diphosphate.. RNA polymerase that catalyzes the synthesis of short RNA molecules used as primers for DNA polymerase during DNA replication. Also part of the exosome, which is a complex involved in RNA degradation. Acts as a poly(A)-binding protein that enhances the interaction between heteromeric, adenine-rich transcripts and the exosome. The protein is DNA primase DnaG of Thermococcus kodakarensis (strain ATCC BAA-918 / JCM 12380 / KOD1) (Pyrococcus kodakaraensis (strain KOD1)).